The chain runs to 486 residues: uncharacterized protein (486 aa).

Positions 1–25 (MGTMRSVYLIIIIILFFAFISLSFG) are cleaved as a signal peptide. 2 stretches are compositionally biased toward basic and acidic residues: residues 306 to 316 (KKEEKENEESS) and 326 to 349 (KKEE…KQEK). Positions 306–349 (KKEEKENEESSKTINQMQRHKKEEKSQTQETKKPSKNEMNKQEK) are disordered.

This is an uncharacterized protein from Methanocaldococcus jannaschii (strain ATCC 43067 / DSM 2661 / JAL-1 / JCM 10045 / NBRC 100440) (Methanococcus jannaschii).